We begin with the raw amino-acid sequence, 638 residues long: Chaperone protein HtpG (638 aa).

The tract at residues 1 to 345 (MTTETFEFQV…AQDLSLNVSR (345 aa)) is a; substrate-binding. Residues 346-560 (EILQQDRHIR…AGELTPALEN (215 aa)) are b. The segment at 561 to 638 (MYRAMGQEVP…LMADRLERTL (78 aa)) is c.

Belongs to the heat shock protein 90 family. Homodimer.

It is found in the cytoplasm. In terms of biological role, molecular chaperone. Has ATPase activity. In Streptomyces coelicolor (strain ATCC BAA-471 / A3(2) / M145), this protein is Chaperone protein HtpG.